The primary structure comprises 245 residues: Protein OXIDATIVE STRESS 3 LIKE 6 (245 aa).

Residues 46-90 (QIGIGLRMSNNNNKSPEESSDSSSSIGESSENEEEEEEDDAVSCQ) form a disordered region. Positions 75-86 (SENEEEEEEDDA) are enriched in acidic residues. The short motif at 143–151 (NKRRRLVIA) is the Nuclear localization signal element. The tract at residues 203 to 230 (DDHRKIMMMMKNKKELMAQTRSCFCLSS) is kinase-inducible domain (KID).

The protein localises to the nucleus. Its function is as follows. Probable transcription factor. Promotes slightly the tolerance to cadmium (Cd) and to oxidizing chemicals (e.g. diamide). The sequence is that of Protein OXIDATIVE STRESS 3 LIKE 6 from Arabidopsis thaliana (Mouse-ear cress).